The following is a 1045-amino-acid chain: Putative sodium-coupled neutral amino acid transporter 10 (1045 aa).

10 consecutive transmembrane segments (helical) span residues L8–F28, I33–F53, S85–G105, V117–L137, F150–F170, I226–Y246, M269–C289, I320–E340, I342–I362, and F375–T395. 3 stretches are compositionally biased toward basic and acidic residues: residues K412 to I453, P460 to Q479, and V503 to E546. Disordered regions lie at residues K412–P584 and E606–G658. Residues N564 to N573 show a composition bias toward polar residues. A compositionally biased stretch (basic and acidic residues) spans P627–G658.

It belongs to the amino acid/polyamine transporter 2 family.

Its subcellular location is the membrane. Functionally, putative sodium-dependent amino acid/proton antiporter. The protein is Putative sodium-coupled neutral amino acid transporter 10 (slc38a10) of Xenopus laevis (African clawed frog).